The following is a 344-amino-acid chain: Methionine aminopeptidase 1C, chloroplastic/mitochondrial (344 aa).

Residue H172 participates in substrate binding. 3 residues coordinate a divalent metal cation: D189, D200, and H262. H269 provides a ligand contact to substrate. A divalent metal cation contacts are provided by E296 and E327.

This sequence belongs to the peptidase M24A family. Methionine aminopeptidase type 1 subfamily. Requires Co(2+) as cofactor. Zn(2+) is required as a cofactor. The cofactor is Mn(2+). It depends on Fe(2+) as a cofactor. As to expression, ubiquitous.

The protein localises to the plastid. Its subcellular location is the chloroplast. It is found in the mitochondrion. The enzyme catalyses Release of N-terminal amino acids, preferentially methionine, from peptides and arylamides.. In terms of biological role, removes the N-terminal methionine from nascent proteins. The N-terminal methionine is often cleaved when the second residue in the primary sequence is small and uncharged (Met-Ala-, Cys, Gly, Pro, Ser, Thr, or Val). The chain is Methionine aminopeptidase 1C, chloroplastic/mitochondrial (MAP1C) from Arabidopsis thaliana (Mouse-ear cress).